The primary structure comprises 109 residues: Aquaporin-2 (109 aa).

Topologically, residues 1 to 6 (SIAFSR) are cytoplasmic. Residues 7-27 (AVFSEFLATLLFVFFGLGSAL) traverse the membrane as a helical segment. Topologically, residues 28 to 35 (NWPQALPS) are extracellular. A helical transmembrane segment spans residues 36–54 (VLQIAMAFGLAIGTLVQAL). The Cytoplasmic segment spans residues 55-59 (GHISG). The discontinuously helical intramembrane region spans 60–69 (AHINPAVTVA). The NPA 1 signature appears at 63–65 (NPA). Topologically, residues 70–80 (CLVGCHVSFLR) are cytoplasmic. Residues 81 to 102 (ATFYLAAQLLGAVAGAAILHEI) form a helical membrane-spanning segment. Residues 103 to 109 (TPPDIRG) are Extracellular-facing.

The protein belongs to the MIP/aquaporin (TC 1.A.8) family. As to quaternary structure, homotetramer. Post-translationally, serine phosphorylation is necessary and sufficient for expression at the apical membrane. Endocytosis is not phosphorylation-dependent. In terms of processing, N-glycosylated.

It is found in the apical cell membrane. Its subcellular location is the basolateral cell membrane. The protein localises to the cell membrane. The protein resides in the cytoplasmic vesicle membrane. It localises to the golgi apparatus. It is found in the trans-Golgi network membrane. It catalyses the reaction H2O(in) = H2O(out). The catalysed reaction is glycerol(in) = glycerol(out). In terms of biological role, forms a water-specific channel that provides the plasma membranes of renal collecting duct with high permeability to water, thereby permitting water to move in the direction of an osmotic gradient. Plays an essential role in renal water homeostasis. Could also be permeable to glycerol. This chain is Aquaporin-2, found in Dugong dugon (Dugong).